A 230-amino-acid chain; its full sequence is Prolactin-3D1 (230 aa).

The N-terminal stretch at 1–29 (MQLTLTLSRASGMQLFLLVSSLLLWEKVA) is a signal peptide. 2 disulfides stabilise this stretch: C81/C200 and C217/C225. 2 N-linked (GlcNAc...) asparagine glycosylation sites follow: N109 and N158.

The protein belongs to the somatotropin/prolactin family.

It is found in the secreted. This Rattus norvegicus (Rat) protein is Prolactin-3D1 (Prl3d1).